The primary structure comprises 190 residues: 7-methyl-GTP pyrophosphatase (190 aa).

The active-site Proton acceptor is the D69.

The protein belongs to the Maf family. YceF subfamily. The cofactor is a divalent metal cation.

Its subcellular location is the cytoplasm. The enzyme catalyses N(7)-methyl-GTP + H2O = N(7)-methyl-GMP + diphosphate + H(+). Its function is as follows. Nucleoside triphosphate pyrophosphatase that hydrolyzes 7-methyl-GTP (m(7)GTP). May have a dual role in cell division arrest and in preventing the incorporation of modified nucleotides into cellular nucleic acids. This is 7-methyl-GTP pyrophosphatase from Xanthomonas axonopodis pv. citri (strain 306).